Here is a 145-residue protein sequence, read N- to C-terminus: Large ribosomal subunit protein uL13 (145 aa).

The protein belongs to the universal ribosomal protein uL13 family. As to quaternary structure, part of the 50S ribosomal subunit.

Its function is as follows. This protein is one of the early assembly proteins of the 50S ribosomal subunit, although it is not seen to bind rRNA by itself. It is important during the early stages of 50S assembly. In Exiguobacterium sibiricum (strain DSM 17290 / CCUG 55495 / CIP 109462 / JCM 13490 / 255-15), this protein is Large ribosomal subunit protein uL13.